The primary structure comprises 1101 residues: Cytospin-A (1101 aa).

Disordered regions lie at residues 1-170 (MRKA…NQIS) and 280-366 (SDCG…SGNA). Polar residues-rich tracts occupy residues 29–48 (ESSA…LSKA) and 64–86 (ASNS…TAMS). Low complexity predominate over residues 93–110 (RSSAGSSSNTKRSGSSGA). 2 stretches are compositionally biased toward basic and acidic residues: residues 114 to 125 (GSSRERLRERSR) and 151 to 165 (GRTD…KSKS). Residues 162–254 (KSKSDNQISD…LKDRLNALGF (93 aa)) are a coiled coil. The span at 333–355 (LTSSDDALDAPSSSSESEGLPST) shows a compositional bias: low complexity. 2 coiled-coil regions span residues 373-427 (CLTE…MDSL) and 492-785 (QHLS…RGRV). Positions 923-978 (SISVSRRSSEELKRDISVPDGSSAPSLMVMTSPSPQLSLSSSSPTASVTPTARSRI) are disordered. Residues 929–939 (RSSEELKRDIS) show a composition bias toward basic and acidic residues. Residues 953–975 (TSPSPQLSLSSSSPTASVTPTAR) are compositionally biased toward low complexity. One can recognise a Calponin-homology (CH) domain in the interval 995–1100 (GSKRNALLKW…YVTSIYKYFE (106 aa)).

It belongs to the cytospin-A family. May interact with both microtubules and actin cytoskeleton.

The protein localises to the cytoplasm. It localises to the cytoskeleton. It is found in the spindle. Its subcellular location is the cell junction. The protein resides in the gap junction. In terms of biological role, involved in cytokinesis and spindle organization. May play a role in actin cytoskeleton organization and microtubule stabilization and hence required for proper cell adhesion and migration. The protein is Cytospin-A (specc1l) of Xenopus tropicalis (Western clawed frog).